Consider the following 201-residue polypeptide: Probable molybdenum cofactor guanylyltransferase (201 aa).

GTP is bound by residues 16–18 (LAG), K28, D75, and D107. D107 contacts Mg(2+).

The protein belongs to the MobA family. The cofactor is Mg(2+).

Its subcellular location is the cytoplasm. The enzyme catalyses Mo-molybdopterin + GTP + H(+) = Mo-molybdopterin guanine dinucleotide + diphosphate. In terms of biological role, transfers a GMP moiety from GTP to Mo-molybdopterin (Mo-MPT) cofactor (Moco or molybdenum cofactor) to form Mo-molybdopterin guanine dinucleotide (Mo-MGD) cofactor. The polypeptide is Probable molybdenum cofactor guanylyltransferase (Mycobacterium bovis (strain ATCC BAA-935 / AF2122/97)).